Here is a 1002-residue protein sequence, read N- to C-terminus: Ephrin type-B receptor 5 (1002 aa).

An N-terminal signal peptide occupies residues 1–29 (MDSNADISARRVSGMDWLWLVCFFHLVTS). Residues 30-564 (LEEILLDTTG…AQDRLPLIVG (535 aa)) lie on the Extracellular side of the membrane. The region spanning 31-213 (EEILLDTTGE…FFYKCPAVVK (183 aa)) is the Eph LBD domain. 2 Fibronectin type-III domains span residues 344 to 452 (APRD…TSQS) and 453 to 548 (VPSA…TLMA). N446 is a glycosylation site (N-linked (GlcNAc...) asparagine). Residues 565–585 (SALGGLAFLVIAAIAILAIIF) traverse the membrane as a helical segment. Topologically, residues 586–1002 (KSKRRETPYT…HLNQLEPVEV (417 aa)) are cytoplasmic. The Protein kinase domain occupies 637-900 (IKIEEVIGSG…QIVSALDKMI (264 aa)). ATP contacts are provided by residues 643–651 (IGSGEFGEV) and K669. D762 functions as the Proton acceptor in the catalytic mechanism. Positions 906-928 (LKATGTGSSRPSQPLLSNSPPDF) are disordered. Over residues 910-928 (GTGSSRPSQPLLSNSPPDF) the composition is skewed to polar residues. The SAM domain maps to 929–993 (PSLSNAHEWL…LNSIQLMKVH (65 aa)). The short motif at 1000–1002 (VEV) is the PDZ-binding element.

The protein belongs to the protein kinase superfamily. Tyr protein kinase family. Ephrin receptor subfamily. As to expression, most abundant in thymus and detectable in brain, retina, kidney, lung and heart. Not detected in skeletal muscle and liver.

It localises to the membrane. It catalyses the reaction L-tyrosyl-[protein] + ATP = O-phospho-L-tyrosyl-[protein] + ADP + H(+). Its function is as follows. Receptor for members of the ephrin-B family. The sequence is that of Ephrin type-B receptor 5 (EPHB5) from Gallus gallus (Chicken).